Consider the following 372-residue polypeptide: Ligninase B (372 aa).

Positions 1-21 (MAFKQLFAAISLALSLSAANA) are cleaved as a signal peptide. Positions 22–28 (AAVIEKR) are excised as a propeptide. Disulfide bonds link cysteine 31-cysteine 43, cysteine 42-cysteine 313, cysteine 62-cysteine 148, and cysteine 277-cysteine 345. Histidine 75 acts as the Proton acceptor in catalysis. Ca(2+) contacts are provided by aspartate 76, glycine 94, aspartate 96, and serine 98. Residue histidine 204 coordinates heme b. Residues serine 205, aspartate 222, threonine 224, isoleucine 227, and aspartate 229 each coordinate Ca(2+). N-linked (GlcNAc...) asparagine glycosylation is present at asparagine 285. Low complexity predominate over residues 350–361 (FPTLTTLPGPET). The segment at 350–372 (FPTLTTLPGPETSVQRIPPPPGA) is disordered.

Belongs to the peroxidase family. Ligninase subfamily. The cofactor is heme b. It depends on Ca(2+) as a cofactor.

It carries out the reaction 1-(3,4-dimethoxyphenyl)-2-(2-methoxyphenoxy)propane-1,3-diol + H2O2 = 3,4-dimethoxybenzaldehyde + guaiacol + glycolaldehyde + H2O. It catalyses the reaction 2 (3,4-dimethoxyphenyl)methanol + H2O2 = 2 (3,4-dimethoxyphenyl)methanol radical + 2 H2O. It functions in the pathway secondary metabolite metabolism; lignin degradation. Depolymerization of lignin. Catalyzes the C(alpha)-C(beta) cleavage of the propyl side chains of lignin. This Phanerodontia chrysosporium (White-rot fungus) protein is Ligninase B (LIPB).